The following is a 438-amino-acid chain: Thymidine phosphorylase (438 aa).

Belongs to the thymidine/pyrimidine-nucleoside phosphorylase family. Homodimer.

It catalyses the reaction thymidine + phosphate = 2-deoxy-alpha-D-ribose 1-phosphate + thymine. Its pathway is pyrimidine metabolism; dTMP biosynthesis via salvage pathway; dTMP from thymine: step 1/2. The enzymes which catalyze the reversible phosphorolysis of pyrimidine nucleosides are involved in the degradation of these compounds and in their utilization as carbon and energy sources, or in the rescue of pyrimidine bases for nucleotide synthesis. This chain is Thymidine phosphorylase, found in Burkholderia cenocepacia (strain ATCC BAA-245 / DSM 16553 / LMG 16656 / NCTC 13227 / J2315 / CF5610) (Burkholderia cepacia (strain J2315)).